A 120-amino-acid chain; its full sequence is U3-hexatoxin-Hi1a (120 aa).

The signal sequence occupies residues Met1 to Ala19. A propeptide spanning residues Leu20–Arg51 is cleaved from the precursor.

The protein belongs to the neurotoxin 25 family. F7 subfamily. In terms of processing, contains 4 disulfide bonds. As to expression, expressed by the venom gland.

The protein localises to the secreted. Weak insecticidal toxin with probable ion channel impairing activity. In vivo, induces paralysis when injected into sheep blowflies (L.cuprina). Shows weak toxicity, since it is only toxic at high doses, and flies recover within 24 hours. This is U3-hexatoxin-Hi1a from Hadronyche infensa (Fraser island funnel-web spider).